Consider the following 1990-residue polypeptide: Protein TANC2 (1990 aa).

Disordered regions lie at residues M1–E85 and S129–T149. Residues S169, S238, S294, and S400 each carry the phosphoserine modification. Residues I396–E442 are disordered. Residues P419 to C431 are compositionally biased toward polar residues. ANK repeat units follow at residues E846–Y878, N884–A913, S917–H946, N950–G979, A990–E1019, W1033–Q1062, R1066–M1095, Q1099–L1128, E1132–H1161, N1165–H1194, and S1198–P1227. 3 TPR repeats span residues L1244 to E1277, V1291 to S1324, and Y1325 to N1358. Disordered regions lie at residues C1372–H1401, E1430–Q1586, and L1692–G1718. Residues S1442 and S1458 each carry the phosphoserine modification. Residues R1469–Y1498 show a composition bias toward polar residues. 2 positions are modified to phosphoserine: S1530 and S1545. Residues V1553 to Q1572 show a composition bias toward polar residues. An asymmetric dimethylarginine mark is found at R1563 and R1576. The residue at position 1579 (S1579) is a Phosphoserine. S1722 carries the phosphoserine modification. The span at S1783–T1798 shows a compositional bias: low complexity. Disordered stretches follow at residues S1783–S1803 and D1821–T1843. 2 positions are modified to phosphoserine: S1824 and S1827. N-linked (GlcNAc...) asparagine glycosylation is present at N1928. The segment at S1968–V1990 is disordered.

The protein belongs to the TANC family. As to quaternary structure, interacts with KIF1A; the interaction decreases in presence of calcium.

The protein localises to the cell projection. The protein resides in the dendritic spine. Scaffolding protein in the dendritic spines which acts as immobile postsynaptic posts able to recruit KIF1A-driven dense core vesicles to dendritic spines. This Homo sapiens (Human) protein is Protein TANC2 (TANC2).